The chain runs to 313 residues: Porphobilinogen deaminase (313 aa).

Cys-242 carries the S-(dipyrrolylmethanemethyl)cysteine modification.

It belongs to the HMBS family. In terms of assembly, monomer. It depends on dipyrromethane as a cofactor.

It catalyses the reaction 4 porphobilinogen + H2O = hydroxymethylbilane + 4 NH4(+). The protein operates within porphyrin-containing compound metabolism; protoporphyrin-IX biosynthesis; coproporphyrinogen-III from 5-aminolevulinate: step 2/4. Functionally, tetrapolymerization of the monopyrrole PBG into the hydroxymethylbilane pre-uroporphyrinogen in several discrete steps. This chain is Porphobilinogen deaminase, found in Pseudomonas putida (strain GB-1).